The chain runs to 357 residues: Probable xyloglucan endotransglucosylase/hydrolase protein 29 (357 aa).

The first 31 residues, 1–31, serve as a signal peptide directing secretion; sequence MRDSIYLLWIDNRLVVIIMMVMMVSCRCVLG. Residues 32 to 232 enclose the GH16 domain; sequence LENINPIFFD…YTFSPFVSEF (201 aa). Glu-117 functions as the Nucleophile in the catalytic mechanism. The active-site Proton donor is Glu-121. Xyloglucan is bound by residues Glu-121 and 134-136; that span reads QTN. N-linked (GlcNAc...) asparagine glycosylation occurs at Asn-140. Xyloglucan is bound by residues 144–148, 211–212, and Gly-216; these read NRGRE and SW. N-linked (GlcNAc...) asparagine glycans are attached at residues Asn-241 and Asn-262. A disulfide bridge connects residues Cys-299 and Cys-312. Arg-304 serves as a coordination point for xyloglucan. A disordered region spans residues 326–357; that stretch reads GRLKFGGSHPKVHKARKKRRRNRSTPVVSADL. The span at 335–348 shows a compositional bias: basic residues; sequence PKVHKARKKRRRNR. Asn-347 is a glycosylation site (N-linked (GlcNAc...) asparagine).

Belongs to the glycosyl hydrolase 16 family. XTH group 3 subfamily. In terms of processing, contains at least one intrachain disulfide bond essential for its enzymatic activity.

The protein localises to the secreted. It localises to the cell wall. It is found in the extracellular space. Its subcellular location is the apoplast. It catalyses the reaction breaks a beta-(1-&gt;4) bond in the backbone of a xyloglucan and transfers the xyloglucanyl segment on to O-4 of the non-reducing terminal glucose residue of an acceptor, which can be a xyloglucan or an oligosaccharide of xyloglucan.. Its function is as follows. Catalyzes xyloglucan endohydrolysis (XEH) and/or endotransglycosylation (XET). Cleaves and religates xyloglucan polymers, an essential constituent of the primary cell wall, and thereby participates in cell wall construction of growing tissues. The polypeptide is Probable xyloglucan endotransglucosylase/hydrolase protein 29 (XTH29) (Arabidopsis thaliana (Mouse-ear cress)).